The primary structure comprises 467 residues: Xanthan biosynthesis protein XanB (467 aa).

It belongs to the mannose-6-phosphate isomerase type 2 family.

It catalyses the reaction D-mannose 6-phosphate = D-fructose 6-phosphate. It carries out the reaction alpha-D-mannose 1-phosphate + GTP + H(+) = GDP-alpha-D-mannose + diphosphate. It functions in the pathway nucleotide-sugar biosynthesis; GDP-alpha-D-mannose biosynthesis; GDP-alpha-D-mannose from alpha-D-mannose 1-phosphate (GTP route): step 1/1. It participates in nucleotide-sugar biosynthesis; GDP-alpha-D-mannose biosynthesis; alpha-D-mannose 1-phosphate from D-fructose 6-phosphate: step 1/2. Functionally, involved in xanthan production. In Xanthomonas campestris pv. campestris (strain ATCC 33913 / DSM 3586 / NCPPB 528 / LMG 568 / P 25), this protein is Xanthan biosynthesis protein XanB (xanB).